We begin with the raw amino-acid sequence, 247 residues long: 3-deoxy-manno-octulosonate cytidylyltransferase (247 aa).

It belongs to the KdsB family.

Its subcellular location is the cytoplasm. The catalysed reaction is 3-deoxy-alpha-D-manno-oct-2-ulosonate + CTP = CMP-3-deoxy-beta-D-manno-octulosonate + diphosphate. It participates in nucleotide-sugar biosynthesis; CMP-3-deoxy-D-manno-octulosonate biosynthesis; CMP-3-deoxy-D-manno-octulosonate from 3-deoxy-D-manno-octulosonate and CTP: step 1/1. Its pathway is bacterial outer membrane biogenesis; lipopolysaccharide biosynthesis. Activates KDO (a required 8-carbon sugar) for incorporation into bacterial lipopolysaccharide in Gram-negative bacteria. The chain is 3-deoxy-manno-octulosonate cytidylyltransferase from Afipia carboxidovorans (strain ATCC 49405 / DSM 1227 / KCTC 32145 / OM5) (Oligotropha carboxidovorans).